The chain runs to 180 residues: Probable RNA 2'-phosphotransferase (180 aa).

It belongs to the KptA/TPT1 family.

Removes the 2'-phosphate from RNA via an intermediate in which the phosphate is ADP-ribosylated by NAD followed by a presumed transesterification to release the RNA and generate ADP-ribose 1''-2''-cyclic phosphate (APPR&gt;P). May function as an ADP-ribosylase. The polypeptide is Probable RNA 2'-phosphotransferase (Thermococcus kodakarensis (strain ATCC BAA-918 / JCM 12380 / KOD1) (Pyrococcus kodakaraensis (strain KOD1))).